A 1207-amino-acid chain; its full sequence is MKAHKTVFNQHPLSLNKLFFVLLLIFFLPPASPAASVNGLYKDSQQLLSFKAALPPTPTLLQNWLSSTGPCSFTGVSCKNSRVSSIDLSNTFLSVDFSLVTSYLLPLSNLESLVLKNANLSGSLTSAAKSQCGVTLDSIDLAENTISGPISDISSFGVCSNLKSLNLSKNFLDPPGKEMLKAATFSLQVLDLSYNNISGFNLFPWVSSMGFVELEFFSLKGNKLAGSIPELDFKNLSYLDLSANNFSTVFPSFKDCSNLQHLDLSSNKFYGDIGSSLSSCGKLSFLNLTNNQFVGLVPKLPSESLQYLYLRGNDFQGVYPNQLADLCKTVVELDLSYNNFSGMVPESLGECSSLELVDISYNNFSGKLPVDTLSKLSNIKTMVLSFNKFVGGLPDSFSNLLKLETLDMSSNNLTGVIPSGICKDPMNNLKVLYLQNNLFKGPIPDSLSNCSQLVSLDLSFNYLTGSIPSSLGSLSKLKDLILWLNQLSGEIPQELMYLQALENLILDFNDLTGPIPASLSNCTKLNWISLSNNQLSGEIPASLGRLSNLAILKLGNNSISGNIPAELGNCQSLIWLDLNTNFLNGSIPPPLFKQSGNIAVALLTGKRYVYIKNDGSKECHGAGNLLEFGGIRQEQLDRISTRHPCNFTRVYRGITQPTFNHNGSMIFLDLSYNKLEGSIPKELGAMYYLSILNLGHNDLSGMIPQQLGGLKNVAILDLSYNRFNGTIPNSLTSLTLLGEIDLSNNNLSGMIPESAPFDTFPDYRFANNSLCGYPLPIPCSSGPKSDANQHQKSHRRQASLAGSVAMGLLFSLFCIFGLIIVAIETKKRRRKKEAALEAYMDGHSHSATANSAWKFTSAREALSINLAAFEKPLRKLTFADLLEATNGFHNDSLVGSGGFGDVYKAQLKDGSVVAIKKLIHVSGQGDREFTAEMETIGKIKHRNLVPLLGYCKVGEERLLVYEYMKYGSLEDVLHDRKKIGIKLNWPARRKIAIGAARGLAFLHHNCIPHIIHRDMKSSNVLLDENLEARVSDFGMARLMSAMDTHLSVSTLAGTPGYVPPEYYQSFRCSTKGDVYSYGVVLLELLTGKQPTDSADFGDNNLVGWVKLHAKGKITDVFDRELLKEDASIEIELLQHLKVACACLDDRHWKRPTMIQVMAMFKEIQAGSGMDSTSTIGADDVNFSGVEGGIEMGINGSIKEGNELSKHL.

The N-terminal stretch at 1-34 (MKAHKTVFNQHPLSLNKLFFVLLLIFFLPPASPA) is a signal peptide. The Cys pair 1 motif lies at 71 to 78 (CSFTGVSC). LRR repeat units follow at residues 109–131 (NLES…AKSQ), 135–157 (TLDS…SSFG), 161–181 (NLKS…EMLK), 186–207 (SLQV…PWVS), 213–234 (ELEF…LDFK), 235–257 (NLSY…KDCS), 258–280 (NLQH…LSSC), 282–304 (KLSF…PSES), 305–325 (LQYL…QLAD), 329–350 (TVVE…SLGE), 353–374 (SLEL…DTLS), 378–400 (NIKT…FSNL), 402–423 (KLET…GICK), 428–450 (NLKV…LSNC), 452–474 (QLVS…LGSL), 476–499 (KLKD…MYLQ), 500–523 (ALEN…SNCT), 524–547 (KLNW…GRLS), 548–570 (NLAI…LGNC), and 572–594 (SLIW…LFKQ). Asparagine 119 is a glycosylation site (N-linked (GlcNAc...) asparagine). N-linked (GlcNAc...) asparagine glycosylation is found at asparagine 166 and asparagine 196. Asparagine 235 and asparagine 245 each carry an N-linked (GlcNAc...) asparagine glycan. Asparagine 287 carries an N-linked (GlcNAc...) asparagine glycan. N-linked (GlcNAc...) asparagine glycans are attached at residues asparagine 339 and asparagine 363. 2 N-linked (GlcNAc...) asparagine glycosylation sites follow: asparagine 412 and asparagine 449. Residue asparagine 521 is glycosylated (N-linked (GlcNAc...) asparagine). 4 N-linked (GlcNAc...) asparagine glycosylation sites follow: asparagine 556, asparagine 584, asparagine 646, and asparagine 662. LRR repeat units follow at residues 664–686 (SMIF…LGAM), 688–711 (YLSI…GGLK), 712–735 (NVAI…TSLT), and 736–758 (LLGE…APFD). N-linked (GlcNAc...) asparagine glycans are attached at residues asparagine 724, asparagine 746, and asparagine 767. Positions 771–779 (CGYPLPIPC) match the Cys pair 2 motif. Residues 803–823 (SVAMGLLFSLFCIFGLIIVAI) traverse the membrane as a helical segment. Residues 888–1163 (FHNDSLVGSG…IQVMAMFKEI (276 aa)) form the Protein kinase domain. Residues 894–902 (VGSGGFGDV) and lysine 916 contribute to the ATP site. The Proton acceptor role is filled by aspartate 1014.

This sequence belongs to the protein kinase superfamily. Ser/Thr protein kinase family.

It localises to the cell membrane. It carries out the reaction L-seryl-[protein] + ATP = O-phospho-L-seryl-[protein] + ADP + H(+). The enzyme catalyses L-threonyl-[protein] + ATP = O-phospho-L-threonyl-[protein] + ADP + H(+). Receptor with a serine/threonine-protein kinase activity. Regulates, in response to brassinosteroid binding, a signaling cascade involved in plant development, including expression of light- and stress-regulated genes, promotion of cell elongation, normal leaf and chloroplast senescence, and flowering. May be involved in a feedback regulation of brassinosteroid biosynthesis. May be also involved in the perception of systemin, a peptide hormone responsible for the systemic activation of defense genes in leaves of wounded plants. This Solanum lycopersicum (Tomato) protein is Brassinosteroid LRR receptor kinase (CURL3).